We begin with the raw amino-acid sequence, 296 residues long: Biliverdin reductase A (296 aa).

Residues 1 to 2 (MN) constitute a propeptide that is removed on maturation. Residues 16–19 (VGRA), 44–46 (SRR), 77–80 (SSSH), and Tyr98 contribute to the NADP(+) site. Thr174 carries the post-translational modification Phosphothreonine. 2 positions are modified to phosphoserine: Ser178 and Ser230. Lys248 and Lys253 each carry N6-acetyllysine. Zn(2+) is bound by residues His280, Cys281, Cys292, and Cys293.

It belongs to the Gfo/Idh/MocA family. Biliverdin reductase subfamily. Monomer. It depends on Zn(2+) as a cofactor. Liver.

It localises to the cytoplasm. The protein resides in the cytosol. The catalysed reaction is (4Z,15Z)-bilirubin IXalpha + NAD(+) = biliverdin IXalpha + NADH + H(+). It carries out the reaction (4Z,15Z)-bilirubin IXalpha + NADP(+) = biliverdin IXalpha + NADPH + H(+). Its pathway is porphyrin-containing compound metabolism; protoheme degradation. Its function is as follows. Reduces the gamma-methene bridge of the open tetrapyrrole, biliverdin IXalpha, to bilirubin with the concomitant oxidation of a NADH or NADPH cofactor. Does not reduce bilirubin IXbeta. Uses the reactants NADH or NADPH depending on the pH; NADH is used at the acidic pH range (6-6.9) and NADPH at the alkaline range (8.5-8.7). NADPH, however, is the probable reactant in biological systems. This is Biliverdin reductase A from Homo sapiens (Human).